The sequence spans 403 residues: Phosphopentomutase (403 aa).

Residues Asp13, Asp298, His303, Asp339, His340, and His351 each contribute to the Mn(2+) site.

This sequence belongs to the phosphopentomutase family. It depends on Mn(2+) as a cofactor.

Its subcellular location is the cytoplasm. The catalysed reaction is 2-deoxy-alpha-D-ribose 1-phosphate = 2-deoxy-D-ribose 5-phosphate. It catalyses the reaction alpha-D-ribose 1-phosphate = D-ribose 5-phosphate. It participates in carbohydrate degradation; 2-deoxy-D-ribose 1-phosphate degradation; D-glyceraldehyde 3-phosphate and acetaldehyde from 2-deoxy-alpha-D-ribose 1-phosphate: step 1/2. Functionally, isomerase that catalyzes the conversion of deoxy-ribose 1-phosphate (dRib-1-P) and ribose 1-phosphate (Rib-1-P) to deoxy-ribose 5-phosphate (dRib-5-P) and ribose 5-phosphate (Rib-5-P), respectively. This chain is Phosphopentomutase, found in Streptococcus thermophilus (strain CNRZ 1066).